The chain runs to 330 residues: 6-methylsalicylic acid decarboxylase acuB (330 aa).

4 residues coordinate Zn(2+): histidine 6, histidine 8, histidine 156, and aspartate 276.

It belongs to the metallo-dependent hydrolases superfamily. ACMSD family. As to quaternary structure, monomer.

It localises to the cytoplasm. The protein localises to the cytosol. It catalyses the reaction 6-methylsalicylate + H(+) = 3-methylphenol + CO2. The protein operates within secondary metabolite biosynthesis. In terms of biological role, 6-methylsalicylic acid decarboxylase; part of the gene cluster that mediates the biosynthesis of aculins. The pathway begins with the synthesis of 6-methylsalicylic acid by the polyketide synthase (PKS) acuA via condensation of acetate and malonate units. The 6-methylsalicylic acid decarboxylase acuB then catalyzes the decarboxylation of 6-methylsalicylic acid to yield m-cresol (also known as 3-methylphenol). These first reactions occur in the cytosol. The intermediate m-cresol is then transported into the endoplasmic reticulum where the cytochrome P450 monooxygenase acuC converts it to m-hydroxybenzyl alcohol, which is further converted to gentisyl alcohol by the cytochrome P450 monooxygenase acuD. Gentisyl alcohol is further oxidized by the oxidoreductase acuE that probably catalyzes hydroxylation of the aromatic ring. The aromatic system might then be opened by oxidation through a Baeyer-Villiger type of oxidation, which could be catalyzed by acuF, with the carboxylic acid at C-1 subsequently reduced to an aldehyde by acuG. Subsequently, a hemiacetal is formed, before the dehydrogenase acuH would reduce the double bond between C-4 and C-6. Finally, keto-enol tautomerism results in formation of aculinic acid, which exists as two diastereomers (both R/S configurations at C-1) by non-enzymatic hemiacetal formation. The carboxypeptidase acuI could be involved in the linking of aculinic acid to an aculene A moiety produced by the aculene biosynthesis cluster and which leads to the production of aculin A. AcuI may also be involved in the attachment of proline to aculinic acid to form epi-aculins A and B. This chain is 6-methylsalicylic acid decarboxylase acuB, found in Aspergillus aculeatus (strain ATCC 16872 / CBS 172.66 / WB 5094).